We begin with the raw amino-acid sequence, 539 residues long: Chaperonin GroEL (539 aa).

Residues 29–32 (TIGP), 86–90 (DGTTT), Gly-413, 476–478 (NAA), and Asp-492 each bind ATP.

This sequence belongs to the chaperonin (HSP60) family. In terms of assembly, forms a cylinder of 14 subunits composed of two heptameric rings stacked back-to-back. Interacts with the co-chaperonin GroES.

The protein localises to the cytoplasm. It carries out the reaction ATP + H2O + a folded polypeptide = ADP + phosphate + an unfolded polypeptide.. Functionally, together with its co-chaperonin GroES, plays an essential role in assisting protein folding. The GroEL-GroES system forms a nano-cage that allows encapsulation of the non-native substrate proteins and provides a physical environment optimized to promote and accelerate protein folding. The polypeptide is Chaperonin GroEL (Pediococcus pentosaceus (strain ATCC 25745 / CCUG 21536 / LMG 10740 / 183-1w)).